The primary structure comprises 86 residues: Large ribosomal subunit protein eL20 (86 aa).

It belongs to the eukaryotic ribosomal protein eL20 family. As to quaternary structure, part of the 50S ribosomal subunit. Binds 23S rRNA.

The polypeptide is Large ribosomal subunit protein eL20 (Saccharolobus solfataricus (strain ATCC 35092 / DSM 1617 / JCM 11322 / P2) (Sulfolobus solfataricus)).